We begin with the raw amino-acid sequence, 1472 residues long: Gag-Pol polyprotein (1472 aa).

Gly-2 carries the N-myristoyl glycine; by host lipid modification. Positions Phe-16–Arg-22 match the Nuclear export signal motif. A Nuclear localization signal motif is present at residues Lys-26 to Lys-32. Disordered stretches follow at residues Glu-115–Tyr-135 and Asp-215–Thr-234. Tyr-135 bears the Phosphotyrosine; by host mark. 2 consecutive CCHC-type zinc fingers follow at residues Leu-390 to Ala-407 and Ile-411 to Asn-428. The tract at residues His-454–Ser-500 is disordered. Residues Trp-456–Arg-469 show a composition bias toward polar residues. Residues Thr-483–Arg-499 show a composition bias toward basic and acidic residues. The Peptidase A2 domain maps to Val-524–Ile-597. Residue Asp-529 is the For protease activity; shared with dimeric partner of the active site. A Reverse transcriptase domain is found at Glu-653–Leu-843. Positions 719, 794, and 795 each coordinate Mg(2+). An RT 'primer grip' region spans residues Trp-836–His-844. A Tryptophan repeat motif motif is present at residues Trp-1007–Trp-1023. Residues Ile-1043–Arg-1166 enclose the RNase H type-1 domain. Mg(2+) contacts are provided by Asp-1052, Glu-1087, Asp-1107, and Asp-1158. Residues Asp-1172 to Gln-1213 form an Integrase-type zinc finger. Residues His-1181, His-1185, Cys-1209, and Cys-1212 each contribute to the Zn(2+) site. The region spanning Val-1223 to Leu-1373 is the Integrase catalytic domain. Positions 1233 and 1285 each coordinate Mg(2+). A DNA-binding region (integrase-type) is located at residues Phe-1392–Asp-1439. Residues Tyr-1440–Glu-1472 form a disordered region. Basic and acidic residues predominate over residues Gly-1454–Glu-1463.

Homotrimer. Interacts with gp41 (via C-terminus). As to quaternary structure, homodimer. The active site consists of two apposed aspartic acid residues. In terms of assembly, heterodimer of p66 RT and p51 RT (RT p66/p51). Heterodimerization of RT is essential for DNA polymerase activity. Despite the sequence identities, p66 RT and p51 RT have distinct folding. Homotetramer; may further associate as a homohexadecamer. The cofactor is Mg(2+). In terms of processing, specific enzymatic cleavages by the viral protease yield mature proteins. The protease is released by autocatalytic cleavage. The polyprotein is cleaved during and after budding, this process is termed maturation. Proteolytic cleavage of p66 RT removes the RNase H domain to yield the p51 RT subunit. Post-translationally, capsid protein p24 is phosphorylated.

It localises to the virion. The protein localises to the host nucleus. Its subcellular location is the host cytoplasm. It is found in the host cell membrane. The catalysed reaction is Specific for a P1 residue that is hydrophobic, and P1' variable, but often Pro.. The enzyme catalyses Endohydrolysis of RNA in RNA/DNA hybrids. Three different cleavage modes: 1. sequence-specific internal cleavage of RNA. Human immunodeficiency virus type 1 and Moloney murine leukemia virus enzymes prefer to cleave the RNA strand one nucleotide away from the RNA-DNA junction. 2. RNA 5'-end directed cleavage 13-19 nucleotides from the RNA end. 3. DNA 3'-end directed cleavage 15-20 nucleotides away from the primer terminus.. It carries out the reaction 3'-end directed exonucleolytic cleavage of viral RNA-DNA hybrid.. It catalyses the reaction DNA(n) + a 2'-deoxyribonucleoside 5'-triphosphate = DNA(n+1) + diphosphate. With respect to regulation, the viral protease is inhibited by many synthetic protease inhibitors (PIs), such as amprenavir, atazanavir, indinavir, loprinavir, nelfinavir, ritonavir and saquinavir. RT can be inhibited either by nucleoside RT inhibitors (NRTIs) or by non nucleoside RT inhibitors (NNRTIs). NRTIs act as chain terminators, whereas NNRTIs inhibit DNA polymerization by binding a small hydrophobic pocket near the RT active site and inducing an allosteric change in this region. Classical NRTIs are abacavir, adefovir (PMEA), didanosine (ddI), lamivudine (3TC), stavudine (d4T), tenofovir (PMPA), zalcitabine (ddC), and zidovudine (AZT). Classical NNRTIs are atevirdine (BHAP U-87201E), delavirdine, efavirenz (DMP-266), emivirine (I-EBU), and nevirapine (BI-RG-587). The tritherapies used as a basic effective treatment of AIDS associate two NRTIs and one NNRTI. Use of protease inhibitors in tritherapy regimens permit more ambitious therapeutic strategies. Its function is as follows. Gag-Pol polyprotein and Gag polyprotein may regulate their own translation, by the binding genomic RNA in the 5'-UTR. At low concentration, Gag-Pol and Gag would promote translation, whereas at high concentration, the polyproteins encapsidate genomic RNA and then shut off translation. In terms of biological role, matrix protein p17 has two main functions: in infected cell, it targets Gag and Gag-pol polyproteins to the plasma membrane via a multipartite membrane-binding signal, that includes its myristointegration complex. The myristoylation signal and the NLS exert conflicting influences its subcellular localization. The key regulation of these motifs might be phosphorylation of a portion of MA molecules on the C-terminal tyrosine at the time of virus maturation, by virion-associated cellular tyrosine kinase. Implicated in the release from host cell mediated by Vpu. Capsid protein p24 forms the conical core that encapsulates the genomic RNA-nucleocapsid complex in the virion. The core is constituted by capsid protein hexamer subunits. The core is disassembled soon after virion entry. Interaction with host PPIA/CYPA protects the virus from restriction by host TRIM5-alpha and from an unknown antiviral activity in host cells. This capsid restriction by TRIM5 is one of the factors which restricts SIV to the simian species. Functionally, nucleocapsid protein p7 encapsulates and protects viral dimeric unspliced (genomic) RNA. Binds these RNAs through its zinc fingers. Facilitates rearangement of nucleic acid secondary structure during retrotranscription of genomic RNA. This capability is referred to as nucleic acid chaperone activity. Its function is as follows. The aspartyl protease mediates proteolytic cleavages of Gag and Gag-Pol polyproteins during or shortly after the release of the virion from the plasma membrane. Cleavages take place as an ordered, step-wise cascade to yield mature proteins. This process is called maturation. Displays maximal activity during the budding process just prior to particle release from the cell. Also cleaves Nef and Vif, probably concomitantly with viral structural proteins on maturation of virus particles. Hydrolyzes host EIF4GI and PABP1 in order to shut off the capped cellular mRNA translation. The resulting inhibition of cellular protein synthesis serves to ensure maximal viral gene expression and to evade host immune response. In terms of biological role, reverse transcriptase/ribonuclease H (RT) is a multifunctional enzyme that converts the viral dimeric RNA genome into dsDNA in the cytoplasm, shortly after virus entry into the cell. This enzyme displays a DNA polymerase activity that can copy either DNA or RNA templates, and a ribonuclease H (RNase H) activity that cleaves the RNA strand of RNA-DNA heteroduplexes in a partially processive 3' to 5' endonucleasic mode. Conversion of viral genomic RNA into dsDNA requires many steps. A tRNA binds to the primer-binding site (PBS) situated at the 5'-end of the viral RNA. RT uses the 3' end of the tRNA primer to perform a short round of RNA-dependent minus-strand DNA synthesis. The reading proceeds through the U5 region and ends after the repeated (R) region which is present at both ends of viral RNA. The portion of the RNA-DNA heteroduplex is digested by the RNase H, resulting in a ssDNA product attached to the tRNA primer. This ssDNA/tRNA hybridizes with the identical R region situated at the 3' end of viral RNA. This template exchange, known as minus-strand DNA strong stop transfer, can be either intra- or intermolecular. RT uses the 3' end of this newly synthesized short ssDNA to perform the RNA-dependent minus-strand DNA synthesis of the whole template. RNase H digests the RNA template except for two polypurine tracts (PPTs) situated at the 5'-end and near the center of the genome. It is not clear if both polymerase and RNase H activities are simultaneous. RNase H can probably proceed both in a polymerase-dependent (RNA cut into small fragments by the same RT performing DNA synthesis) and a polymerase-independent mode (cleavage of remaining RNA fragments by free RTs). Secondly, RT performs DNA-directed plus-strand DNA synthesis using the PPTs that have not been removed by RNase H as primers. PPTs and tRNA primers are then removed by RNase H. The 3' and 5' ssDNA PBS regions hybridize to form a circular dsDNA intermediate. Strand displacement synthesis by RT to the PBS and PPT ends produces a blunt ended, linear dsDNA copy of the viral genome that includes long terminal repeats (LTRs) at both ends. Integrase catalyzes viral DNA integration into the host chromosome, by performing a series of DNA cutting and joining reactions. This enzyme activity takes place after virion entry into a cell and reverse transcription of the RNA genome in dsDNA. The first step in the integration process is 3' processing. This step requires a complex comprising the viral genome, matrix protein, Vpr and integrase. This complex is called the pre-integration complex (PIC). The integrase protein removes 2 nucleotides from each 3' end of the viral DNA, leaving recessed CA OH's at the 3' ends. In the second step, the PIC enters cell nucleus. This process is mediated through integrase and Vpr proteins, and allows the virus to infect a non dividing cell. This ability to enter the nucleus is specific of lentiviruses, other retroviruses cannot and rely on cell division to access cell chromosomes. In the third step, termed strand transfer, the integrase protein joins the previously processed 3' ends to the 5' ends of strands of target cellular DNA at the site of integration. The 5'-ends are produced by integrase-catalyzed staggered cuts, 5 bp apart. A Y-shaped, gapped, recombination intermediate results, with the 5'-ends of the viral DNA strands and the 3' ends of target DNA strands remaining unjoined, flanking a gap of 5 bp. The last step is viral DNA integration into host chromosome. This involves host DNA repair synthesis in which the 5 bp gaps between the unjoined strands are filled in and then ligated. Since this process occurs at both cuts flanking the SIV genome, a 5 bp duplication of host DNA is produced at the ends of SIV integration. Alternatively, Integrase may catalyze the excision of viral DNA just after strand transfer, this is termed disintegration. The polypeptide is Gag-Pol polyprotein (gag-pol) (Simian immunodeficiency virus agm.grivet (isolate AGM gr-1) (SIV-agm.gri)).